A 231-amino-acid polypeptide reads, in one-letter code: Phosphatidylserine decarboxylase proenzyme (231 aa).

Ser188 acts as the Schiff-base intermediate with substrate; via pyruvic acid in catalysis. Ser188 carries the post-translational modification Pyruvic acid (Ser); by autocatalysis.

It belongs to the phosphatidylserine decarboxylase family. PSD-A subfamily. In terms of assembly, heterodimer of a large membrane-associated beta subunit and a small pyruvoyl-containing alpha subunit. Pyruvate serves as cofactor. Post-translationally, is synthesized initially as an inactive proenzyme. Formation of the active enzyme involves a self-maturation process in which the active site pyruvoyl group is generated from an internal serine residue via an autocatalytic post-translational modification. Two non-identical subunits are generated from the proenzyme in this reaction, and the pyruvate is formed at the N-terminus of the alpha chain, which is derived from the carboxyl end of the proenzyme. The post-translation cleavage follows an unusual pathway, termed non-hydrolytic serinolysis, in which the side chain hydroxyl group of the serine supplies its oxygen atom to form the C-terminus of the beta chain, while the remainder of the serine residue undergoes an oxidative deamination to produce ammonia and the pyruvoyl prosthetic group on the alpha chain.

It localises to the cell membrane. It carries out the reaction a 1,2-diacyl-sn-glycero-3-phospho-L-serine + H(+) = a 1,2-diacyl-sn-glycero-3-phosphoethanolamine + CO2. It participates in phospholipid metabolism; phosphatidylethanolamine biosynthesis; phosphatidylethanolamine from CDP-diacylglycerol: step 2/2. Functionally, catalyzes the formation of phosphatidylethanolamine (PtdEtn) from phosphatidylserine (PtdSer). The protein is Phosphatidylserine decarboxylase proenzyme of Rickettsia felis (strain ATCC VR-1525 / URRWXCal2) (Rickettsia azadi).